The chain runs to 372 residues: Chemerin-like receptor 1 (372 aa).

The Extracellular portion of the chain corresponds to 1–39; that stretch reads MEYEGYNDSSIYGEEYSDGSDYIVDLEEAGPLEAKVAEV. A glycan (N-linked (GlcNAc...) asparagine) is linked at Asn-7. The chain crosses the membrane as a helical span at residues 40-62; it reads FLVVIYSLVCFLGILGNGLVIVI. The Cytoplasmic portion of the chain corresponds to 63–73; sequence ATFKMKKTVNT. The helical transmembrane segment at 74–95 threads the bilayer; the sequence is VWFVNLAVADFLFNIFLPIHIT. The Extracellular portion of the chain corresponds to 96 to 112; sequence YAAMDYHWVFGKAMCKI. Cysteines 110 and 188 form a disulfide. Residues 113-133 form a helical membrane-spanning segment; the sequence is SSFLLSHNMYTSVFLLTVISF. The Cytoplasmic portion of the chain corresponds to 134–152; sequence DRCISVLLPVWSQNHRSVR. A helical transmembrane segment spans residues 153-174; the sequence is LAYMTCVVVWVLAFFLSSPSLV. Residues 175-223 lie on the Extracellular side of the membrane; it reads FRDTVSTSHGKITCFNNFSLAAPEPFSHSTHPRTDPVGYSRHVAVTVTR. The N-linked (GlcNAc...) asparagine glycan is linked to Asn-191. Residues 224–244 form a helical membrane-spanning segment; sequence FLCGFLIPVFIITACYLTIVF. Residues 245–260 are Cytoplasmic-facing; sequence KLQRNRLAKTKKPFKI. Residues 261-281 form a helical membrane-spanning segment; that stretch reads IITIIITFFLCWCPYHTLYLL. At 282–299 the chain is on the extracellular side; that stretch reads ELHHTAVPASVFSLGLPL. Residues 300–319 traverse the membrane as a helical segment; it reads ATAVAIANSCMNPILYVFMG. Residues 320 to 372 are Cytoplasmic-facing; sequence HDFKKFKVALFSRLVNALSEDTGPSSYPSHRSFTKMSSLIEKASVNEKETSTL. Position 338 is a phosphoserine (Ser-338). Position 341 is a phosphothreonine (Thr-341). Ser-348, Ser-351, and Ser-357 each carry phosphoserine. Thr-371 carries the phosphothreonine modification.

The protein belongs to the chemokine-like receptor (CMKLR) family. As to expression, high expression in heart and lung, low in small intestines, colon, kidney, liver, uterus and brain.

Its subcellular location is the cell membrane. Receptor for the chemoattractant adipokine chemerin/RARRES2 and for the omega-3 fatty acid derived molecule resolvin E1. Interaction with RARRES2 initiates activation of G proteins G(i)/G(o) and beta-arrestin pathways inducing cellular responses via second messenger pathways such as intracellular calcium mobilization, phosphorylation of MAP kinases MAPK1/MAPK3 (ERK1/2), TYRO3, MAPK14/P38MAPK and PI3K leading to multifunctional effects, like, reduction of immune responses, enhancing of adipogenesis and angionesis. Resolvin E1 down-regulates cytokine production in macrophages by reducing the activation of MAPK1/3 (ERK1/2) and NF-kappa-B. Positively regulates adipogenesis and adipocyte metabolism. The protein is Chemerin-like receptor 1 (Cmklr1) of Rattus norvegicus (Rat).